A 32-amino-acid chain; its full sequence is Growth hormone-related protein 4 (32 aa).

A disulfide bond links C4 and C11.

The protein belongs to the somatotropin/prolactin family. Post-translationally, glycosylated. As to expression, placental basal zone cells.

The protein localises to the secreted. In Rattus norvegicus (Rat), this protein is Growth hormone-related protein 4.